The sequence spans 444 residues: Forkhead box protein F2 (444 aa).

The interval 32–98 is disordered; sequence PAAAAAAAAA…KKASSGLRRP (67 aa). Residues 34 to 75 are compositionally biased toward low complexity; sequence AAAAAAAAPETTSSSSSSSSASCASSSSSSNSASAPSAACKS. Gly residues predominate over residues 76–87; that stretch reads AGGGGAGAGSGG. Residues 99 to 190 constitute a DNA-binding region (fork-head); that stretch reads EKPPYSYIAL…EFMFEEGSFR (92 aa). Disordered stretches follow at residues 256 to 323 and 338 to 367; these read GAGA…SPAM and AHWSSPGASPYLKQPPALTPSSNPAASAGL. Residues 263-274 show a composition bias toward basic residues; sequence AHPHHHHHHHVP. Residues 293 to 308 show a composition bias toward gly residues; sequence GPGGVGAAGGGGGGDY. The span at 309–323 shows a compositional bias: low complexity; it reads GPDSSSSPVPSSPAM.

Interacts with the transcription factors TBP and TFIIB. Lung and placenta. Predominantly expressed in gastrointestinal tract including stomach.

The protein localises to the nucleus. Probable transcription activator for a number of lung-specific genes. Mediates up-regulation of the E3 ligase IRF2BPL and drives ubiquitination and degradation of CTNNB1. The sequence is that of Forkhead box protein F2 (FOXF2) from Homo sapiens (Human).